We begin with the raw amino-acid sequence, 479 residues long: NADH dehydrogenase [ubiquinone] flavoprotein 1, mitochondrial (479 aa).

Position 103–112 (103–112 (GRGGAGFPSG)) interacts with NADH. 216-264 (RGAGAYICGEETALIESIEGKQGKPRLKPPFPAMAGLYGCPTTVTNVET) serves as a coordination point for FMN. The [4Fe-4S] cluster site is built by cysteine 396, cysteine 399, cysteine 402, and cysteine 442.

The protein belongs to the complex I 51 kDa subunit family. In terms of assembly, complex I is composed of about 45 different subunits. This is a component of the flavoprotein-sulfur (FP) fragment of the enzyme. FMN serves as cofactor. The cofactor is [4Fe-4S] cluster.

It localises to the mitochondrion inner membrane. The enzyme catalyses a ubiquinone + NADH + 5 H(+)(in) = a ubiquinol + NAD(+) + 4 H(+)(out). Its function is as follows. Core subunit of the mitochondrial membrane respiratory chain NADH dehydrogenase (Complex I) that is believed to belong to the minimal assembly required for catalysis. Complex I functions in the transfer of electrons from NADH to the respiratory chain. The immediate electron acceptor for the enzyme is believed to be ubiquinone. This chain is NADH dehydrogenase [ubiquinone] flavoprotein 1, mitochondrial (ndufv1), found in Dictyostelium discoideum (Social amoeba).